Consider the following 183-residue polypeptide: Protein jagunal homolog 1 (183 aa).

At 1 to 39 (MASRAGPRAAGTDGSDFQHRERVAMHYQMSVTLKYEIKK) the chain is on the cytoplasmic side. At Ser3 the chain carries Phosphoserine. Residues 40–60 (LIYVHLVIWLLLVAKMSVGHL) form a helical membrane-spanning segment. The Lumenal segment spans residues 61–71 (RLLSHDQVAMP). A helical membrane pass occupies residues 72 to 92 (YQWEYPYLLSIVPSVLGLLSF). Topologically, residues 93 to 96 (PRNN) are cytoplasmic. Residues 97-117 (ISYLVLSMISMGLFSIAPLIY) form a helical membrane-spanning segment. At 118 to 137 (GSMEMFPAAQQLYRHGKAYR) the chain is on the lumenal side. Residues 138–158 (FLFGFSAVSVMYLVLVLAVQV) traverse the membrane as a helical segment. Over 159-183 (HAWQLYYSKKLLDSWFTSTQEKKRK) the chain is Cytoplasmic.

The protein belongs to the jagunal family. Interacts with COPA, COPB2 and COPG2.

It is found in the endoplasmic reticulum membrane. Endoplasmic reticulum transmembrane protein involved in vesicle-mediated transport, which is required for neutrophil function. Required for vesicle-mediated transport; it is however unclear whether it is involved in early secretory pathway or intracellular protein transport. Acts as a regulator of neutrophil function, probably via its role in vesicle-mediated transport: required for defense against fungal pathogens and for granulocyte colony-stimulating factor (GM-CSF) signaling pathway; possibly by regulating glycosylation and/or targeting of proteins contributing to the viability and migration of neutrophils. The protein is Protein jagunal homolog 1 of Mus musculus (Mouse).